The sequence spans 129 residues: HTH-type transcriptional regulator HmrR (129 aa).

Residues 1-68 form the HTH merR-type domain; it reads MNIGEASERS…VEECRQLLAL (68 aa). Positions 4 to 23 form a DNA-binding region, H-T-H motif; the sequence is GEASERSGLPSKTIRYYEDI.

As to quaternary structure, homodimer.

The protein localises to the cytoplasm. Its function is as follows. Regulates the transcription of actP. It detects cytoplasmic copper stress and activates transcription in response to increasing copper concentrations. In the absence of copper, it negatively regulates the transcription of actP. The sequence is that of HTH-type transcriptional regulator HmrR (hmrR) from Rhizobium leguminosarum bv. viciae.